A 363-amino-acid chain; its full sequence is Probable butyrate kinase (363 aa).

This sequence belongs to the acetokinase family.

The protein resides in the cytoplasm. It catalyses the reaction butanoate + ATP = butanoyl phosphate + ADP. The protein is Probable butyrate kinase of Maridesulfovibrio salexigens (strain ATCC 14822 / DSM 2638 / NCIMB 8403 / VKM B-1763) (Desulfovibrio salexigens).